A 422-amino-acid polypeptide reads, in one-letter code: Elongation factor 1-gamma (422 aa).

The 82-residue stretch at 1–82 (MALVLHAGKT…YVARLKADNP (82 aa)) folds into the GST N-terminal domain. A GST C-terminal domain is found at 87 to 215 (SLIDYAHIEQ…VKQTESVPPV (129 aa)). The tract at residues 210 to 269 (ESVPPVPSAKKPSQPKETKSKAKEEPKKEAKKEPAKPKAEAAEEVEEAPKPKPKNPLDLL) is disordered. Over residues 223–250 (QPKETKSKAKEEPKKEAKKEPAKPKAEA) the composition is skewed to basic and acidic residues. One can recognise an EF-1-gamma C-terminal domain in the interval 262 to 422 (PKNPLDLLPP…EALLDAKCFK (161 aa)).

In terms of assembly, EF-1 is composed of four subunits: alpha, beta, delta, and gamma.

In terms of biological role, probably plays a role in anchoring the complex to other cellular components. The protein is Elongation factor 1-gamma of Prunus avium (Cherry).